A 276-amino-acid polypeptide reads, in one-letter code: 2-dehydro-3-deoxyphosphooctonate aldolase (276 aa).

Belongs to the KdsA family.

It localises to the cytoplasm. The catalysed reaction is D-arabinose 5-phosphate + phosphoenolpyruvate + H2O = 3-deoxy-alpha-D-manno-2-octulosonate-8-phosphate + phosphate. It participates in carbohydrate biosynthesis; 3-deoxy-D-manno-octulosonate biosynthesis; 3-deoxy-D-manno-octulosonate from D-ribulose 5-phosphate: step 2/3. Its pathway is bacterial outer membrane biogenesis; lipopolysaccharide biosynthesis. In Xanthomonas axonopodis pv. citri (strain 306), this protein is 2-dehydro-3-deoxyphosphooctonate aldolase.